Reading from the N-terminus, the 221-residue chain is MGQKVHPHGLRVGVIKDWDAKWYANSQNFADNLIEDDKIRKFVKKRSYSAGIAKIEIERTAKRVKINIHTGKPGMIIGKGGKGIEELKSEILKMIKEKNVIINIVEVKRPETDAQLMAENVAQQLEKRISFRRAMKQTIQRAMRSGAKGVKTACSGRLGGAEIARTEQYHEGTIPLQTLRADIDYGFAEADTTYGKIGVKVWLYKGEVLPTKKVRTEEISQ.

Residues 39 to 108 enclose the KH type-2 domain; that stretch reads IRKFVKKRSY…NVIINIVEVK (70 aa).

The protein belongs to the universal ribosomal protein uS3 family. As to quaternary structure, part of the 30S ribosomal subunit. Forms a tight complex with proteins S10 and S14.

In terms of biological role, binds the lower part of the 30S subunit head. Binds mRNA in the 70S ribosome, positioning it for translation. This chain is Small ribosomal subunit protein uS3, found in Clostridium novyi (strain NT).